A 959-amino-acid polypeptide reads, in one-letter code: DEAD-box ATP-dependent RNA helicase rde-12 (959 aa).

Residues 1 to 336 (MSSFGNNAGG…EGVNAPVRAP (336 aa)) form a disordered region. The span at 71 to 97 (GRREDDRSHSRDNHGGSRYGERDDRGN) shows a compositional bias: basic and acidic residues. A compositionally biased stretch (polar residues) spans 98–118 (NGRSADNRYSQSNYNYDSNRG). Residues 122–134 (YQRDNHGSKDDRG) are compositionally biased toward basic and acidic residues. A compositionally biased stretch (polar residues) spans 137 to 160 (NQYNDHGSNHNSNSRNDQYRQGSY). Composition is skewed to basic and acidic residues over residues 166–181 (SGYRRDDDRRRNDNDQ) and 189–201 (RDSDRNSPRDHHN). Residues 202–213 (YNSQSSPRSHQG) are compositionally biased toward polar residues. Composition is skewed to basic and acidic residues over residues 219-239 (SAPKEDNQRRYDNHQGGHDSY) and 255-270 (YRNDYRSQQDSRDHRS). Positions 271–280 (GGNNSSSGFK) are enriched in low complexity. Positions 281-301 (NDGGFGGNDNRGFGNNGGGSF) are enriched in gly residues. Over residues 302–317 (GNPNNSYRGNSNNIGG) the composition is skewed to low complexity. A Q motif motif is present at residues 380–408 (TSWTNSGLHPTILETLKRIKYNNVRTIQG). In terms of domain architecture, Helicase ATP-binding spans 411 to 599 (IPQVLDGHDV…NELMKRLPGQ (189 aa)). 424–431 (AETSAGKT) serves as a coordination point for ATP. The DEAD box signature appears at 539–542 (DEAD). The 161-residue stretch at 632 to 792 (KLREILKQNV…KVPDFLDAMA (161 aa)) folds into the Helicase C-terminal domain. 2 disordered regions span residues 793 to 834 (KSSR…GGGR) and 858 to 959 (GGGG…DDEW). Composition is skewed to gly residues over residues 800 to 834 (GTSGFGQRGGYGGRGGGFGGTGRGRGGGVFGGGGR) and 858 to 872 (GGGGFGGVKPSGFGG). The span at 930–941 (TLGSSTFGTANN) shows a compositional bias: polar residues. Over residues 942-959 (ADEEPTETGADGNDDDEW) the composition is skewed to acidic residues.

Belongs to the DEAD box helicase family. DDX3/DED1 subfamily. In terms of assembly, interacts with wago-1, ergo-1 and rde-1. Mg(2+) is required as a cofactor. In terms of tissue distribution, expressed in the soma and germline.

Its subcellular location is the cytoplasm. It localises to the perinuclear region. The protein localises to the cytoplasmic granule. It is found in the P-body. It catalyses the reaction ATP + H2O = ADP + phosphate + H(+). Probable ATP-dependent RNA helicase involved in RNAi-mediated gene silencing. Specifically required in the endogenous siRNA pathway for biogenesis of secondary endogenous small interfering RNA (siRNA) intermediates called 22G-RNAs. May associate with and recruit rde-10 to primary siRNA-targeted mRNA for secondary siRNA synthesis. May be recruited to target mRNAs by rde-1 and/or ergo-1. In Caenorhabditis elegans, this protein is DEAD-box ATP-dependent RNA helicase rde-12.